A 316-amino-acid chain; its full sequence is Biotin synthase (316 aa).

The Radical SAM core domain occupies 36–264 (FDNRITLCAI…TATLRICGGR (229 aa)). [4Fe-4S] cluster contacts are provided by cysteine 53, cysteine 57, and cysteine 60. 3 residues coordinate [2Fe-2S] cluster: cysteine 129, cysteine 189, and arginine 259.

It belongs to the radical SAM superfamily. Biotin synthase family. As to quaternary structure, homodimer. Requires [4Fe-4S] cluster as cofactor. [2Fe-2S] cluster serves as cofactor.

The enzyme catalyses (4R,5S)-dethiobiotin + (sulfur carrier)-SH + 2 reduced [2Fe-2S]-[ferredoxin] + 2 S-adenosyl-L-methionine = (sulfur carrier)-H + biotin + 2 5'-deoxyadenosine + 2 L-methionine + 2 oxidized [2Fe-2S]-[ferredoxin]. It participates in cofactor biosynthesis; biotin biosynthesis; biotin from 7,8-diaminononanoate: step 2/2. In terms of biological role, catalyzes the conversion of dethiobiotin (DTB) to biotin by the insertion of a sulfur atom into dethiobiotin via a radical-based mechanism. This is Biotin synthase from Desulfovibrio desulfuricans (strain ATCC 27774 / DSM 6949 / MB).